Reading from the N-terminus, the 353-residue chain is Photosystem II protein D1 (353 aa).

The residue at position 2 (Thr-2) is an N-acetylthreonine. Thr-2 is modified (phosphothreonine). A run of 3 helical transmembrane segments spans residues 29–46, 118–133, and 142–156; these read YIGWFGVLMIPTLLTATS, HFLLGVACYMGREWEL, and WIAVAYSAPVAAATA. His-118 serves as a coordination point for chlorophyll a. Tyr-126 is a binding site for pheophytin a. Residues Asp-170 and Glu-189 each contribute to the [CaMn4O5] cluster site. Residues 197 to 218 traverse the membrane as a helical segment; that stretch reads FHMLGVAGVFGGSLFSAMHGSL. His-198 contributes to the chlorophyll a binding site. A quinone is bound by residues His-215 and 264–265; that span reads SF. His-215 provides a ligand contact to Fe cation. His-272 lines the Fe cation pocket. A helical membrane pass occupies residues 274–288; the sequence is FLAAWPVVGIWFTAL. [CaMn4O5] cluster-binding residues include His-332, Glu-333, Asp-342, and Ala-344. Residues 345 to 353 constitute a propeptide that is removed on maturation; sequence AVEVPSING.

Belongs to the reaction center PufL/M/PsbA/D family. As to quaternary structure, PSII is composed of 1 copy each of membrane proteins PsbA, PsbB, PsbC, PsbD, PsbE, PsbF, PsbH, PsbI, PsbJ, PsbK, PsbL, PsbM, PsbT, PsbX, PsbY, PsbZ, Psb30/Ycf12, at least 3 peripheral proteins of the oxygen-evolving complex and a large number of cofactors. It forms dimeric complexes. The D1/D2 heterodimer binds P680, chlorophylls that are the primary electron donor of PSII, and subsequent electron acceptors. It shares a non-heme iron and each subunit binds pheophytin, quinone, additional chlorophylls, carotenoids and lipids. D1 provides most of the ligands for the Mn4-Ca-O5 cluster of the oxygen-evolving complex (OEC). There is also a Cl(-1) ion associated with D1 and D2, which is required for oxygen evolution. The PSII complex binds additional chlorophylls, carotenoids and specific lipids. serves as cofactor. Post-translationally, tyr-161 forms a radical intermediate that is referred to as redox-active TyrZ, YZ or Y-Z. In terms of processing, C-terminally processed by CTPA; processing is essential to allow assembly of the oxygen-evolving complex and thus photosynthetic growth.

It localises to the plastid. The protein localises to the chloroplast thylakoid membrane. It catalyses the reaction 2 a plastoquinone + 4 hnu + 2 H2O = 2 a plastoquinol + O2. Its function is as follows. Photosystem II (PSII) is a light-driven water:plastoquinone oxidoreductase that uses light energy to abstract electrons from H(2)O, generating O(2) and a proton gradient subsequently used for ATP formation. It consists of a core antenna complex that captures photons, and an electron transfer chain that converts photonic excitation into a charge separation. The D1/D2 (PsbA/PsbD) reaction center heterodimer binds P680, the primary electron donor of PSII as well as several subsequent electron acceptors. The sequence is that of Photosystem II protein D1 from Cucumis sativus (Cucumber).